The following is a 573-amino-acid chain: MTEPIIEFKDFSFKYNSQAEPTLKNINLKINKGEKILLAGPSGSGKSTIGRCLNGLIPNIDQGEVKGKCLVNGKDITSTSLFDFSFTTSTILQDADSQFIGLTVGEDIAFALENDCQPKDKMHQTVNQWANELKIKELLTQSPQSLSGGQKQIVALAGVLVDESPILLFDEPLANLDPASGLKTMAIIDKIQKELNATVIIIEHRVEEVLSQLIDRIILVNEGTIVADQPTNQLLHSNTLEKIGVREPLYLKALTAADVNLSSIKEVDQISTLPVSEKISDKLAAWTKQAKITKKEVDNLPLLKLDHVGHQYSKNQPYPLKDVSTTINQGDFISIVGQNGAGKTTLCRTICGFISNEGKITLKDQNLSDLSIKERAEKIGYVMQDPNQMISQKMIFDEIALGLRLRNVDEETIKQKVDQTLKICGLYPFRHWPISALSFGQKKRVTIAAILVLEPEIIILDEPTAGQDWKTYTEIMSFLKHLNTMGKTIIIITHDMHLMLEYTSRSLAFAKGKLIADTTPIELLTNQALIKEASLKRTSLYDLAKHYNLPDPNKFVQAYINFEQQNWKDEDYE.

ABC transporter domains are found at residues 6 to 247 and 303 to 536; these read IEFK…GVRE and LKLD…ASLK. ATP is bound by residues 40–47 and 337–344; these read GPSGSGKS and GQNGAGKT.

It belongs to the ABC transporter superfamily.

The protein localises to the cell membrane. In terms of biological role, probably part of an ABC transporter complex. Responsible for energy coupling to the transport system. This is Putative ABC transporter ATP-binding protein LJ_1704 from Lactobacillus johnsonii (strain CNCM I-12250 / La1 / NCC 533).